A 349-amino-acid chain; its full sequence is Magnesium-protoporphyrin IX monomethyl ester [oxidative] cyclase (349 aa).

A compositionally biased stretch (low complexity) spans 1 to 10 (MTATTATAPA). The interval 1–23 (MTATTATAPAMRGGGRNELPPHL) is disordered.

It belongs to the AcsF family. Fe cation serves as cofactor.

The enzyme catalyses Mg-protoporphyrin IX 13-monomethyl ester + 3 NADPH + 3 O2 + 2 H(+) = 3,8-divinyl protochlorophyllide a + 3 NADP(+) + 5 H2O. It functions in the pathway porphyrin-containing compound metabolism; chlorophyll biosynthesis (light-independent). In terms of biological role, catalyzes the formation of the isocyclic ring in chlorophyll biosynthesis. Mediates the cyclase reaction, which results in the formation of divinylprotochlorophyllide (Pchlide) characteristic of all chlorophylls from magnesium-protoporphyrin IX 13-monomethyl ester (MgPMME). The chain is Magnesium-protoporphyrin IX monomethyl ester [oxidative] cyclase from Prochlorococcus marinus (strain MIT 9303).